We begin with the raw amino-acid sequence, 606 residues long: 1-deoxy-D-xylulose-5-phosphate synthase (606 aa).

Residues His63 and 104 to 106 contribute to the thiamine diphosphate site; that span reads GHS. Asp137 contributes to the Mg(2+) binding site. Thiamine diphosphate-binding positions include 138–139, Asn166, Tyr273, and Glu354; that span reads GS. Asn166 contacts Mg(2+).

It belongs to the transketolase family. DXPS subfamily. In terms of assembly, homodimer. Mg(2+) is required as a cofactor. Requires thiamine diphosphate as cofactor.

The catalysed reaction is D-glyceraldehyde 3-phosphate + pyruvate + H(+) = 1-deoxy-D-xylulose 5-phosphate + CO2. Its pathway is metabolic intermediate biosynthesis; 1-deoxy-D-xylulose 5-phosphate biosynthesis; 1-deoxy-D-xylulose 5-phosphate from D-glyceraldehyde 3-phosphate and pyruvate: step 1/1. Functionally, catalyzes the acyloin condensation reaction between C atoms 2 and 3 of pyruvate and glyceraldehyde 3-phosphate to yield 1-deoxy-D-xylulose-5-phosphate (DXP). The sequence is that of 1-deoxy-D-xylulose-5-phosphate synthase from Sulfurimonas denitrificans (strain ATCC 33889 / DSM 1251) (Thiomicrospira denitrificans (strain ATCC 33889 / DSM 1251)).